A 98-amino-acid chain; its full sequence is Small ribosomal subunit protein uS19 (98 aa).

The disordered stretch occupies residues 77–98 (TRTYRGHAGGKAEKGGAAPKRK).

This sequence belongs to the universal ribosomal protein uS19 family.

Protein S19 forms a complex with S13 that binds strongly to the 16S ribosomal RNA. This chain is Small ribosomal subunit protein uS19, found in Chlorobium phaeovibrioides (strain DSM 265 / 1930) (Prosthecochloris vibrioformis (strain DSM 265)).